The following is a 378-amino-acid chain: Chaperone protein DnaJ (378 aa).

A J domain is found at 5–69; sequence EYYDRLGVSK…QKRAAYDQYG (65 aa). The CR-type zinc finger occupies 134 to 216; the sequence is GVEKEVSYNR…CHGTGHEKQA (83 aa). Residues Cys-147, Cys-150, Cys-164, Cys-167, Cys-190, Cys-193, Cys-204, and Cys-207 each coordinate Zn(2+). CXXCXGXG motif repeat units follow at residues 147-154, 164-171, 190-197, and 204-211; these read CGTCLGSG, CRKCHGSG, CDICHGSG, and CQTCHGTG.

The protein belongs to the DnaJ family. As to quaternary structure, homodimer. The cofactor is Zn(2+).

The protein localises to the cytoplasm. Its function is as follows. Participates actively in the response to hyperosmotic and heat shock by preventing the aggregation of stress-denatured proteins and by disaggregating proteins, also in an autonomous, DnaK-independent fashion. Unfolded proteins bind initially to DnaJ; upon interaction with the DnaJ-bound protein, DnaK hydrolyzes its bound ATP, resulting in the formation of a stable complex. GrpE releases ADP from DnaK; ATP binding to DnaK triggers the release of the substrate protein, thus completing the reaction cycle. Several rounds of ATP-dependent interactions between DnaJ, DnaK and GrpE are required for fully efficient folding. Also involved, together with DnaK and GrpE, in the DNA replication of plasmids through activation of initiation proteins. The sequence is that of Chaperone protein DnaJ from Streptococcus pyogenes serotype M6 (strain ATCC BAA-946 / MGAS10394).